A 305-amino-acid chain; its full sequence is NAD kinase 2 (305 aa).

Aspartate 78 functions as the Proton acceptor in the catalytic mechanism. Residues 78 to 79 (DG), 152 to 153 (NE), aspartate 182, 193 to 198 (TAYSLS), and asparagine 251 contribute to the NAD(+) site.

It belongs to the NAD kinase family. The cofactor is a divalent metal cation.

It is found in the cytoplasm. It catalyses the reaction NAD(+) + ATP = ADP + NADP(+) + H(+). Involved in the regulation of the intracellular balance of NAD and NADP, and is a key enzyme in the biosynthesis of NADP. Catalyzes specifically the phosphorylation on 2'-hydroxyl of the adenosine moiety of NAD to yield NADP. This chain is NAD kinase 2, found in Synechococcus sp. (strain ATCC 27144 / PCC 6301 / SAUG 1402/1) (Anacystis nidulans).